Consider the following 406-residue polypeptide: Phosphopentomutase (406 aa).

The Mn(2+) site is built by D10, D305, H310, D346, H347, and H358.

This sequence belongs to the phosphopentomutase family. The cofactor is Mn(2+).

The protein resides in the cytoplasm. It catalyses the reaction 2-deoxy-alpha-D-ribose 1-phosphate = 2-deoxy-D-ribose 5-phosphate. The enzyme catalyses alpha-D-ribose 1-phosphate = D-ribose 5-phosphate. The protein operates within carbohydrate degradation; 2-deoxy-D-ribose 1-phosphate degradation; D-glyceraldehyde 3-phosphate and acetaldehyde from 2-deoxy-alpha-D-ribose 1-phosphate: step 1/2. In terms of biological role, isomerase that catalyzes the conversion of deoxy-ribose 1-phosphate (dRib-1-P) and ribose 1-phosphate (Rib-1-P) to deoxy-ribose 5-phosphate (dRib-5-P) and ribose 5-phosphate (Rib-5-P), respectively. This is Phosphopentomutase from Rhizobium etli (strain ATCC 51251 / DSM 11541 / JCM 21823 / NBRC 15573 / CFN 42).